The chain runs to 358 residues: Acetylxylan esterase / glucomannan deacetylase (358 aa).

An N-terminal signal peptide occupies residues 1 to 18 (MKLLFPILLLTGSYFLSA). Cysteine 19 is lipidated: N-palmitoyl cysteine. The S-diacylglycerol cysteine moiety is linked to residue cysteine 19. Serine 160 serves as the catalytic Nucleophile. Residues aspartate 333 and histidine 335 each act as charge relay system in the active site.

It belongs to the carbohydrate esterase 2 (CE2) family.

It is found in the cell membrane. The enzyme catalyses Deacetylation of xylans and xylo-oligosaccharides.. The protein operates within glycan degradation; xylan degradation. In terms of biological role, involved in the degradation of plant cell wall polysaccharides. Catalyzes the deacetylation of acetylated birchwood xylan and glucomannan, with equal efficiency, and of the synthetic substrate 4-nitrophenyl acetate (4-NPAc). Does not bind cellulose, cellohexaose and beta-glucan. This Cellvibrio japonicus (strain Ueda107) (Pseudomonas fluorescens subsp. cellulosa) protein is Acetylxylan esterase / glucomannan deacetylase.